A 418-amino-acid chain; its full sequence is Methylmalonic aciduria type A protein, mitochondrial (418 aa).

Residues 1-65 constitute a mitochondrion transit peptide; it reads MPMLLPHPHQ…LLSDGLKRKL (65 aa). Residues 150–158, D292, and 328–330 contribute to the GTP site; these read GPPGAGKST and SAR.

The protein belongs to the SIMIBI class G3E GTPase family. ArgK/MeaB subfamily. As to quaternary structure, homodimer. Interacts with MMUT (the apoenzyme form); the interaction is GTP dependent. Widely expressed. Highest expression is observed in liver and skeletal muscle.

It localises to the mitochondrion. The protein localises to the cytoplasm. The enzyme catalyses GTP + H2O = GDP + phosphate + H(+). With respect to regulation, GTPase activity is stimulated by MMUT. GTPase, binds and hydrolyzes GTP. Involved in intracellular vitamin B12 metabolism, mediates the transport of cobalamin (Cbl) into mitochondria for the final steps of adenosylcobalamin (AdoCbl) synthesis. Functions as a G-protein chaperone that assists AdoCbl cofactor delivery from MMAB to the methylmalonyl-CoA mutase (MMUT). Plays a dual role as both a protectase and a reactivase for MMUT. Protects MMUT from progressive inactivation by oxidation by decreasing the rate of the formation of the oxidized inactive cofactor hydroxocobalamin (OH2Cbl). Additionally acts a reactivase by promoting the replacement of OH2Cbl by the active cofactor AdoCbl, restoring the activity of MMUT in the presence and hydrolysis of GTP. The chain is Methylmalonic aciduria type A protein, mitochondrial from Homo sapiens (Human).